The sequence spans 127 residues: Thioredoxin (127 aa).

The Thioredoxin domain maps to 2-115 (SDGVKHINSA…LRAAAEKMGR (114 aa)). Active-site nucleophile residues include Cys33 and Cys36. Cysteines 33 and 36 form a disulfide.

Belongs to the thioredoxin family.

In terms of biological role, participates in various redox reactions through the reversible oxidation of its active center dithiol to a disulfide and catalyzes dithiol-disulfide exchange reactions. This is Thioredoxin (trx) from Neurospora crassa (strain ATCC 24698 / 74-OR23-1A / CBS 708.71 / DSM 1257 / FGSC 987).